A 70-amino-acid chain; its full sequence is Basic phospholipase A2 2 (70 aa).

A disulfide bridge connects residues Cys-28 and Cys-44. His-47 is an active-site residue. Residue Asp-48 coordinates Ca(2+).

It belongs to the phospholipase A2 family. Group II subfamily. D49 sub-subfamily. It depends on Ca(2+) as a cofactor. As to expression, expressed by the venom gland.

The protein localises to the secreted. The enzyme catalyses a 1,2-diacyl-sn-glycero-3-phosphocholine + H2O = a 1-acyl-sn-glycero-3-phosphocholine + a fatty acid + H(+). In terms of biological role, snake venom phospholipase A2 (PLA2) that exhibits strong myotoxicity. PLA2 catalyzes the calcium-dependent hydrolysis of the 2-acyl groups in 3-sn-phosphoglycerides. This is Basic phospholipase A2 2 from Trimeresurus stejnegeri (Chinese green tree viper).